The primary structure comprises 120 residues: Large ribosomal subunit protein bL17 (120 aa).

This sequence belongs to the bacterial ribosomal protein bL17 family. Part of the 50S ribosomal subunit. Contacts protein L32.

The protein is Large ribosomal subunit protein bL17 of Bacillus cereus (strain ATCC 14579 / DSM 31 / CCUG 7414 / JCM 2152 / NBRC 15305 / NCIMB 9373 / NCTC 2599 / NRRL B-3711).